A 227-amino-acid polypeptide reads, in one-letter code: Large ribosomal subunit protein uL3 (227 aa).

Residues 146–167 (RGPMAHGSKFHRHQGSNGACSS) are disordered.

The protein belongs to the universal ribosomal protein uL3 family. Part of the 50S ribosomal subunit. Forms a cluster with proteins L14 and L19.

Its function is as follows. One of the primary rRNA binding proteins, it binds directly near the 3'-end of the 23S rRNA, where it nucleates assembly of the 50S subunit. The sequence is that of Large ribosomal subunit protein uL3 from Agathobacter rectalis (strain ATCC 33656 / DSM 3377 / JCM 17463 / KCTC 5835 / VPI 0990) (Eubacterium rectale).